The sequence spans 318 residues: 4-diphosphocytidyl-2-C-methyl-D-erythritol kinase (318 aa).

The active site involves K25. ATP is bound at residue 110–120; sequence PVAGGMAGGSA. D152 is an active-site residue.

Belongs to the GHMP kinase family. IspE subfamily.

It carries out the reaction 4-CDP-2-C-methyl-D-erythritol + ATP = 4-CDP-2-C-methyl-D-erythritol 2-phosphate + ADP + H(+). It participates in isoprenoid biosynthesis; isopentenyl diphosphate biosynthesis via DXP pathway; isopentenyl diphosphate from 1-deoxy-D-xylulose 5-phosphate: step 3/6. Functionally, catalyzes the phosphorylation of the position 2 hydroxy group of 4-diphosphocytidyl-2C-methyl-D-erythritol. This chain is 4-diphosphocytidyl-2-C-methyl-D-erythritol kinase, found in Mycobacterium tuberculosis (strain ATCC 25177 / H37Ra).